The sequence spans 213 residues: Kynurenine formamidase (213 aa).

Substrate is bound at residue Trp20. His50, His54, and Asp56 together coordinate Zn(2+). Residue His60 is the Proton donor/acceptor of the active site. 2 residues coordinate Zn(2+): His161 and Glu173.

The protein belongs to the Cyclase 1 superfamily. KynB family. Homodimer. Requires Zn(2+) as cofactor.

The catalysed reaction is N-formyl-L-kynurenine + H2O = L-kynurenine + formate + H(+). Its pathway is amino-acid degradation; L-tryptophan degradation via kynurenine pathway; L-kynurenine from L-tryptophan: step 2/2. Its function is as follows. Catalyzes the hydrolysis of N-formyl-L-kynurenine to L-kynurenine, the second step in the kynurenine pathway of tryptophan degradation. The chain is Kynurenine formamidase from Pseudomonas aeruginosa (strain ATCC 15692 / DSM 22644 / CIP 104116 / JCM 14847 / LMG 12228 / 1C / PRS 101 / PAO1).